A 520-amino-acid polypeptide reads, in one-letter code: uncharacterized protein (520 aa).

9 helical membrane passes run 38–58 (VVLI…IPGG), 84–104 (IAIY…GIFN), 105–125 (IGIS…ILKV), 138–158 (IITV…VATL), 167–187 (VVSA…LVET), 220–240 (FGWL…AVVL), 271–291 (FLSF…VYTA), 318–338 (IAIG…SVLI), and 355–375 (ASLV…MVYF).

Its subcellular location is the cell membrane. This is an uncharacterized protein from Mycoplasma genitalium (strain ATCC 33530 / DSM 19775 / NCTC 10195 / G37) (Mycoplasmoides genitalium).